A 345-amino-acid chain; its full sequence is S-adenosylmethionine:tRNA ribosyltransferase-isomerase (345 aa).

Belongs to the QueA family. Monomer.

Its subcellular location is the cytoplasm. It carries out the reaction 7-aminomethyl-7-carbaguanosine(34) in tRNA + S-adenosyl-L-methionine = epoxyqueuosine(34) in tRNA + adenine + L-methionine + 2 H(+). The protein operates within tRNA modification; tRNA-queuosine biosynthesis. In terms of biological role, transfers and isomerizes the ribose moiety from AdoMet to the 7-aminomethyl group of 7-deazaguanine (preQ1-tRNA) to give epoxyqueuosine (oQ-tRNA). The sequence is that of S-adenosylmethionine:tRNA ribosyltransferase-isomerase from Helicobacter pylori (strain P12).